A 558-amino-acid chain; its full sequence is MSFKTDAETAQSSTMRPIGEIAAKLGLNVDNIEPYGHYKAKINPAEAFKLPQKQGRLILVTAINPTPAGEGKTTVTIGLADALRHIGKDSVIALREPSLGPVFGVKGGAAGGGYAQVLPMEDINLHFTGDFHAIGAANNLLAAMLDNHIYQGNELNIDPKRVLWRRVVDMNDRQLRNIIDGMGKPVDGVMRPDGFDITVASEVMAVFCLAKDISDLKERFGNILVAYAKDGSPVYAKDLKAHGAMAALLKDAIKPNLVQTIEGTPAFVHGGPFANIAHGCNSVTATRLAKHLADYAVTEAGFGADLGAEKFCDIKCRLAGLKPDAAVVVATVRALKYNGGVERANLGEENLEALAKGLPNLLKHISNLKNVFGLPVVVALNRFVSDSDAELAMIEKACAEHGVEVSLTEVWGKGGAGGADLARKVVNAIDNQPNNFGFAYDVELGIKDKIRAIAQKVYGAEDVDFSAEASAEIASLEKLGLDKMPICMAKTQYSLSDNAKLLGCPEGFRITVRGITVSAGAGFIVALCGNMMKMPGLPKVPAAEKIDVDEHGVIHGLF.

Residue 66 to 73 (TPAGEGKT) participates in ATP binding.

The protein belongs to the formate--tetrahydrofolate ligase family.

It carries out the reaction (6S)-5,6,7,8-tetrahydrofolate + formate + ATP = (6R)-10-formyltetrahydrofolate + ADP + phosphate. Its pathway is one-carbon metabolism; tetrahydrofolate interconversion. The sequence is that of Formate--tetrahydrofolate ligase from Neisseria gonorrhoeae (strain NCCP11945).